Reading from the N-terminus, the 521-residue chain is U4/U6 small nuclear ribonucleoprotein Prp4 (521 aa).

At K26 the chain carries N6-acetyllysine. 7 WD repeats span residues 229–268 (DDRP…LHTL), 271–318 (HNTN…VADI), 321–360 (HTVR…ILHQ), 363–402 (HSMG…IMFL), 405–444 (HLKE…VYTI), 447–487 (HQNL…LKTL), and 490–521 (HEGK…WMAE).

Component of the precatalytic spliceosome (spliceosome B complex). Component of the U4/U6-U5 tri-snRNP complex, a building block of the precatalytic spliceosome (spliceosome B complex). The U4/U6-U5 tri-snRNP complex is composed of the U4, U6 and U5 snRNAs and at least PRPF3, PRPF4, PRPF6, PRPF8, PRPF31, SNRNP200, TXNL4A, SNRNP40, SNRPB, SNRPD1, SNRPD2, SNRPD3, SNRPE, SNRPF, SNRPG, DDX23, CD2BP2, PPIH, SNU13, EFTUD2, SART1 and USP39, plus LSM2, LSM3, LSM4, LSM5, LSM6, LSM7 and LSM8. Interacts directly with PRPF18, PPIH and PRPF3. Part of a heteromeric complex containing PPIH, PRPF3 and PRPF4 that is stable in the absence of RNA. Interacts with ERCC6.

Its subcellular location is the nucleus. It is found in the nucleus speckle. Its function is as follows. Plays a role in pre-mRNA splicing as component of the U4/U6-U5 tri-snRNP complex that is involved in spliceosome assembly, and as component of the precatalytic spliceosome (spliceosome B complex). The polypeptide is U4/U6 small nuclear ribonucleoprotein Prp4 (PRPF4) (Bos taurus (Bovine)).